Consider the following 395-residue polypeptide: Elongation factor Tu (395 aa).

Residues 10–204 (KPHVNIGTIG…TVDEYIPTPQ (195 aa)) enclose the tr-type G domain. The tract at residues 19-26 (GHVDHGKT) is G1. 19–26 (GHVDHGKT) contributes to the GTP binding site. Thr-26 serves as a coordination point for Mg(2+). The G2 stretch occupies residues 60–64 (GITIN). The interval 81-84 (DAPG) is G3. Residues 81 to 85 (DAPGH) and 136 to 139 (NKCD) each bind GTP. A G4 region spans residues 136–139 (NKCD). Residues 174 to 176 (SAL) form a G5 region.

It belongs to the TRAFAC class translation factor GTPase superfamily. Classic translation factor GTPase family. EF-Tu/EF-1A subfamily. In terms of assembly, monomer.

It is found in the cytoplasm. It carries out the reaction GTP + H2O = GDP + phosphate + H(+). Its function is as follows. GTP hydrolase that promotes the GTP-dependent binding of aminoacyl-tRNA to the A-site of ribosomes during protein biosynthesis. The protein is Elongation factor Tu of Ligilactobacillus salivarius (strain UCC118) (Lactobacillus salivarius).